The sequence spans 195 residues: MVENIEVSNLNVKVFGKWDTKVEVRDPSLKKYIDLMSIYLPHTGGRHEHRRFGKSRIPIVERLINNLMRPGRNKGKKMLAYNIVKTTFDIIAVKTGQNPIQVLVRAIENAAPREEVTRIMYGGIVYYVAVDVAPQRRVDLALRHLVTGASEASFNNPKPIEEALAEEIIAAANNDNKSVAIRKKEEIERIALSSR.

This sequence belongs to the universal ribosomal protein uS7 family. As to quaternary structure, part of the 30S ribosomal subunit.

One of the primary rRNA binding proteins, it binds directly to 16S rRNA where it nucleates assembly of the head domain of the 30S subunit. Is located at the subunit interface close to the decoding center. This chain is Small ribosomal subunit protein uS7, found in Sulfolobus acidocaldarius (strain ATCC 33909 / DSM 639 / JCM 8929 / NBRC 15157 / NCIMB 11770).